Reading from the N-terminus, the 554-residue chain is (+)-delta-cadinene synthase isozyme XC1 (554 aa).

Positions 1-16 (MASQVSQMPSSSPLSS) are enriched in low complexity. Positions 1 to 23 (MASQVSQMPSSSPLSSNKDEMRP) are disordered. Mg(2+)-binding residues include Asp307, Asp311, Asp451, and Glu455. Residues 307-311 (DDTYD) carry the DDXXD motif motif.

This sequence belongs to the terpene synthase family. Requires Mg(2+) as cofactor.

It carries out the reaction (2E,6E)-farnesyl diphosphate = (1S,8aR)-delta-cadinene + diphosphate. It functions in the pathway secondary metabolite biosynthesis; terpenoid biosynthesis. Responsible for the cyclization of trans,trans-farnesyl diphosphate (FPP) to (+)-delta cadinene. The chain is (+)-delta-cadinene synthase isozyme XC1 from Gossypium arboreum (Tree cotton).